Reading from the N-terminus, the 234-residue chain is UPF0309 protein lmo0025 (234 aa).

One can recognise an SIS domain in the interval 31 to 205 (VADSIMNDGI…ELMLEKGYTP (175 aa)).

It belongs to the UPF0309 family.

This is UPF0309 protein lmo0025 from Listeria monocytogenes serovar 1/2a (strain ATCC BAA-679 / EGD-e).